The primary structure comprises 359 residues: Membrane-bound lytic murein transglycosylase C (359 aa).

Residues 1-16 (MKKVLALALIAPLLIS) form the signal peptide. A lipid anchor (N-palmitoyl cysteine) is attached at Cys-17. Cys-17 carries S-diacylglycerol cysteine lipidation.

It belongs to the transglycosylase Slt family.

It is found in the cell outer membrane. It catalyses the reaction Exolytic cleavage of the (1-&gt;4)-beta-glycosidic linkage between N-acetylmuramic acid (MurNAc) and N-acetylglucosamine (GlcNAc) residues in peptidoglycan, from either the reducing or the non-reducing ends of the peptidoglycan chains, with concomitant formation of a 1,6-anhydrobond in the MurNAc residue.. In terms of biological role, murein-degrading enzyme. May play a role in recycling of muropeptides during cell elongation and/or cell division. The protein is Membrane-bound lytic murein transglycosylase C of Edwardsiella ictaluri (strain 93-146).